The following is a 478-amino-acid chain: Zinc metalloproteinase/disintegrin (478 aa).

An N-terminal signal peptide occupies residues Met-1 to Ser-20. Residues Ile-21–Leu-187 constitute a propeptide that is removed on maturation. The region spanning Arg-193 to Pro-389 is the Peptidase M12B domain. 3 disulfide bridges follow: Cys-304/Cys-384, Cys-344/Cys-368, and Cys-346/Cys-351. His-329 contributes to the Zn(2+) binding site. Glu-330 is a catalytic residue. Zn(2+)-binding residues include His-333 and His-339. Residues Leu-390–Arg-408 constitute a propeptide that is removed on maturation. Residues Thr-397–Gly-478 enclose the Disintegrin domain. 6 disulfide bridges follow: Cys-411–Cys-420, Cys-413–Cys-421, Cys-426–Cys-440, Cys-434–Cys-464, Cys-439–Cys-443, and Cys-452–Cys-471. Residues Asn-474–Gly-478 constitute a propeptide that is removed on maturation.

It belongs to the venom metalloproteinase (M12B) family. P-II subfamily. P-IIa sub-subfamily. It depends on Zn(2+) as a cofactor. Expressed by the venom gland.

The protein resides in the secreted. Snake venom zinc metalloproteinase that causes hemorrhage by provoking the degradation of the sub-endothelial matrix proteins (fibronectin, laminin, type IV collagen, nidogen, and gelatins). In terms of biological role, displays low cytotoxicity. In vitro, inhibits cancer cell migration (human breast cancer cell line MDA-MB-231) with a significant rate after 24 hours of incubation. This is Zinc metalloproteinase/disintegrin (MPII) from Crotalus durissus collilineatus (Brazilian rattlesnake).